A 132-amino-acid polypeptide reads, in one-letter code: Transcription antitermination protein NusB (132 aa).

Belongs to the NusB family.

Involved in transcription antitermination. Required for transcription of ribosomal RNA (rRNA) genes. Binds specifically to the boxA antiterminator sequence of the ribosomal RNA (rrn) operons. This chain is Transcription antitermination protein NusB, found in Campylobacter jejuni subsp. jejuni serotype O:2 (strain ATCC 700819 / NCTC 11168).